We begin with the raw amino-acid sequence, 175 residues long: ATP synthase subunit b, chloroplastic (175 aa).

Residues 21–40 (LLESNVINIIILISLLIYLG) form a helical membrane-spanning segment.

It belongs to the ATPase B chain family. In terms of assembly, F-type ATPases have 2 components, F(1) - the catalytic core - and F(0) - the membrane proton channel. F(1) has five subunits: alpha(3), beta(3), gamma(1), delta(1), epsilon(1). F(0) has four main subunits: a(1), b(1), b'(1) and c(10-14). The alpha and beta chains form an alternating ring which encloses part of the gamma chain. F(1) is attached to F(0) by a central stalk formed by the gamma and epsilon chains, while a peripheral stalk is formed by the delta, b and b' chains.

Its subcellular location is the plastid. The protein resides in the chloroplast thylakoid membrane. Its function is as follows. F(1)F(0) ATP synthase produces ATP from ADP in the presence of a proton or sodium gradient. F-type ATPases consist of two structural domains, F(1) containing the extramembraneous catalytic core and F(0) containing the membrane proton channel, linked together by a central stalk and a peripheral stalk. During catalysis, ATP synthesis in the catalytic domain of F(1) is coupled via a rotary mechanism of the central stalk subunits to proton translocation. Functionally, component of the F(0) channel, it forms part of the peripheral stalk, linking F(1) to F(0). In Cyanidium caldarium (Red alga), this protein is ATP synthase subunit b, chloroplastic.